Consider the following 1088-residue polypeptide: Methionine S-methyltransferase (1088 aa).

This sequence belongs to the class I-like SAM-binding methyltransferase superfamily. In terms of assembly, homotetramer.

Its subcellular location is the cytoplasm. It carries out the reaction L-methionine + S-adenosyl-L-methionine = S-methyl-L-methionine + S-adenosyl-L-homocysteine. Catalyzes the S-methylmethionine (SMM) biosynthesis from adenosyl-L-homocysteine (AdoMet) and methionine. SMM biosynthesis (by MMT1) and degradation (by HMT-1, HMT-2 and HMT-3) constitute the SMM cycle in plants, which is probably required to achieve short term control of AdoMet level. Also able to catalyze the selenium-methylmethionine (SeMM) from AdoMet and selenium-methionine (SeMet). May play a role in phoem sulfur transport; such function is however not essential. In Wollastonia biflora (Beach sunflower), this protein is Methionine S-methyltransferase (MMT1).